Consider the following 957-residue polypeptide: Glycine dehydrogenase (decarboxylating) (957 aa).

N6-(pyridoxal phosphate)lysine is present on Lys-708.

The protein belongs to the GcvP family. As to quaternary structure, the glycine cleavage system is composed of four proteins: P, T, L and H. Pyridoxal 5'-phosphate serves as cofactor.

The catalysed reaction is N(6)-[(R)-lipoyl]-L-lysyl-[glycine-cleavage complex H protein] + glycine + H(+) = N(6)-[(R)-S(8)-aminomethyldihydrolipoyl]-L-lysyl-[glycine-cleavage complex H protein] + CO2. In terms of biological role, the glycine cleavage system catalyzes the degradation of glycine. The P protein binds the alpha-amino group of glycine through its pyridoxal phosphate cofactor; CO(2) is released and the remaining methylamine moiety is then transferred to the lipoamide cofactor of the H protein. The protein is Glycine dehydrogenase (decarboxylating) of Cronobacter sakazakii (strain ATCC BAA-894) (Enterobacter sakazakii).